Reading from the N-terminus, the 109-residue chain is Nucleoid-associated protein YbaB (109 aa).

The protein belongs to the YbaB/EbfC family. As to quaternary structure, homodimer.

The protein localises to the cytoplasm. It localises to the nucleoid. In terms of biological role, binds to DNA and alters its conformation. May be involved in regulation of gene expression, nucleoid organization and DNA protection. In Escherichia coli O8 (strain IAI1), this protein is Nucleoid-associated protein YbaB.